Reading from the N-terminus, the 54-residue chain is Large ribosomal subunit protein bL33B (54 aa).

Belongs to the bacterial ribosomal protein bL33 family.

The protein is Large ribosomal subunit protein bL33B of Mycolicibacterium smegmatis (strain ATCC 700084 / mc(2)155) (Mycobacterium smegmatis).